A 1232-amino-acid chain; its full sequence is Histone-lysine N-methyltransferase MECOM (1232 aa).

The disordered stretch occupies residues 22-68; that stretch reads PEIPLEEMPDADADGITSVPSLHIQEPCSPATSSESFTPKEGSPYKA. The segment covering 25–34 has biased composition (acidic residues); the sequence is PLEEMPDADA. An SET domain is found at 80 to 192; it reads DEFELRESTM…PGEELLLFMK (113 aa). Glycyl lysine isopeptide (Lys-Gly) (interchain with G-Cter in SUMO2) cross-links involve residues K101 and K192. Residues 191 to 442 form an interaction with SUV39H1 and probably MAPK9 and SMAD3 region; that stretch reads MKSEEDPHEP…NHFAAGGFFG (252 aa). 5 consecutive C2H2-type zinc fingers follow at residues 211-238, 265-287, 293-315, 321-344, and 350-372; these read HRCE…STPH, QDCK…MLSH, YKCD…QMSH, YECE…RSQH, and HACP…KHIH. K294 is covalently cross-linked (Glycyl lysine isopeptide (Lys-Gly) (interchain with G-Cter in SUMO2)). Residues K369 and K376 each participate in a glycyl lysine isopeptide (Lys-Gly) (interchain with G-Cter in SUMO2) cross-link. A C2H2-type 6 zinc finger spans residues 378–400; the sequence is FICEVCHKSYTQFSNLCRHKRMH. Residues 407–429 form a C2H2-type 7; atypical zinc finger; sequence IKCKDCGQMFSTTSSLNKHRRFC. Residues K432, K525, K545, K549, and K557 each participate in a glycyl lysine isopeptide (Lys-Gly) (interchain with G-Cter in SUMO2) cross-link. A disordered region spans residues 548–622; that stretch reads SKHPPVGDNK…KCKENGKMFK (75 aa). Positions 562–577 are enriched in basic and acidic residues; it reads LPERSSEERPLEKISD. The span at 588-600 shows a compositional bias: polar residues; sequence STPSGSDLETTSG. The span at 608-622 shows a compositional bias: basic and acidic residues; that stretch reads ESDKEKCKENGKMFK. Residues 611-624 carry the Nuclear localization signal motif; the sequence is KEKCKENGKMFKDK. K624 is covalently cross-linked (Glycyl lysine isopeptide (Lys-Gly) (interchain with G-Cter in SUMO2)). Phosphoserine is present on S626. Glycyl lysine isopeptide (Lys-Gly) (interchain with G-Cter in SUMO2) cross-links involve residues K637, K665, K687, and K723. The tract at residues 720-823 is disordered; the sequence is LPLKMEPQSP…DGSLQHARPT (104 aa). S728 carries the post-translational modification Phosphoserine. Glycyl lysine isopeptide (Lys-Gly) (interchain with G-Cter in SUMO2) cross-links involve residues K733, K734, and K737. Phosphoserine is present on S742. The CTBP-binding motif 1 signature appears at 743–747; sequence PFDLT. Residues K751, K754, and K762 each participate in a glycyl lysine isopeptide (Lys-Gly) (interchain with G-Cter in SUMO2) cross-link. The span at 758-773 shows a compositional bias: polar residues; that stretch reads SGPSKPSGTPATSQDQ. A CTBP-binding motif 2 motif is present at residues 774-778; the sequence is PLDLS. Glycyl lysine isopeptide (Lys-Gly) (interchain with G-Cter in SUMO2) cross-links involve residues K789, K802, and K803. The segment covering 791-805 has biased composition (basic and acidic residues); it reads TEPRKNHVFGEKKGS. The span at 806–816 shows a compositional bias: polar residues; that stretch reads NMDTRPSSDGS. Glycyl lysine isopeptide (Lys-Gly) (interchain with G-Cter in SUMO2) cross-links involve residues K837, K846, K848, and K879. 3 C2H2-type zinc fingers span residues 914-936, 942-965, and 971-993; these read YTCR…LRTH, YRCK…RNIH, and FKCH…LKKH. K1020 participates in a covalent cross-link: Glycyl lysine isopeptide (Lys-Gly) (interchain with G-Cter in SUMO2). Positions 1032 to 1043 are enriched in polar residues; the sequence is IGNSNHGSQSPR. A disordered region spans residues 1032–1107; sequence IGNSNHGSQS…GVTRLDEEIP (76 aa). Phosphoserine is present on residues S1039 and S1041. Positions 1044–1059 are enriched in basic and acidic residues; that stretch reads NMEERMNGSHFKDKKA. Residues K1055 and K1058 each participate in a glycyl lysine isopeptide (Lys-Gly) (interchain with G-Cter in SUMO2) cross-link. Acidic residues predominate over residues 1068–1088; that stretch reads LLDDEEVEDEVLLDEEDEDND. Residues 1089–1104 show a composition bias toward basic and acidic residues; it reads IPGKPRKELGVTRLDE. Residues K1122, K1129, K1134, K1151, K1178, and K1186 each participate in a glycyl lysine isopeptide (Lys-Gly) (interchain with G-Cter in SUMO2) cross-link.

Homooligomer. Interacts with CTBP1. Interacts with SMAD3 (via MH2 domain); the interaction is direct. Interacts with SMAD4; through interaction with SMAD3. Interacts with CREBBP, KAT2B and histone deacetylases. Interacts with MAPK8 and MAPK9; inhibits JNK signaling. Interacts with SUV39H1 (via SET domain); enhances MECOM transcriptional repression activity. May be acetylated by CREBBP and KAT2B.

It localises to the nucleus. Its subcellular location is the nucleus speckle. The protein localises to the cytoplasm. It carries out the reaction L-lysyl(9)-[histone H3] + S-adenosyl-L-methionine = N(6)-methyl-L-lysyl(9)-[histone H3] + S-adenosyl-L-homocysteine + H(+). In terms of biological role, functions as a transcriptional regulator binding to DNA sequences in the promoter region of target genes and regulating positively or negatively their expression. Oncogene which plays a role in development, cell proliferation and differentiation. May also play a role in apoptosis through regulation of the JNK and TGF-beta signaling. Involved in hematopoiesis. Its function is as follows. Displays histone methyltransferase activity and monomethylates 'Lys-9' of histone H3 (H3K9me1) in vitro. Probably catalyzes the monomethylation of free histone H3 in the cytoplasm which is then transported to the nucleus and incorporated into nucleosomes where SUV39H methyltransferases use it as a substrate to catalyze histone H3 'Lys-9' trimethylation. Likely to be one of the primary histone methyltransferases along with PRDM16 that direct cytoplasmic H3K9me1 methylation. The protein is Histone-lysine N-methyltransferase MECOM of Mus musculus (Mouse).